The chain runs to 288 residues: MGTVVYQQGFQSQLNEPRALRLRLSSPNPHFSQPFGLALKSHLLDSSHAEDTRNRNDDKAAASPVSDSSGWSSLQSLSSGSSSSTKTTTSSEKESSYYVQRPSSCRALSDQSLALCTENLGSESGSDVTDIDELFSLDVQTKNLGETTTETRTLKSRKRSVSPSDLPPPLTTMRGFQCIQMRPHRENGRLVMTATNAPPRNGCFQADRSNGRLRLSILKDSNEFVENEEETIEPEETEEYEEEEEEEEDEDEDEVMGIENVQVSRRCVQGDRENRGLLNWESFCVATS.

The segment covering 48 to 60 (HAEDTRNRNDDKA) has biased composition (basic and acidic residues). Disordered stretches follow at residues 48 to 100 (HAED…YYVQ), 146 to 172 (ETTTETRTLKSRKRSVSPSDLPPPLTT), and 222 to 261 (NEFVENEEETIEPEETEEYEEEEEEEEDEDEDEVMGIENV). Positions 66–90 (SDSSGWSSLQSLSSGSSSSTKTTTS) are enriched in low complexity. An FAF domain is found at 165-217 (DLPPPLTTMRGFQCIQMRPHRENGRLVMTATNAPPRNGCFQADRSNGRLRLSI). A compositionally biased stretch (acidic residues) spans 223–256 (EFVENEEETIEPEETEEYEEEEEEEEDEDEDEVM).

Belongs to the fantastic four family. Expressed in the shoot apex, stamens, young leaves and young siliques, but not in old leaves. Detected in provascular and vascular tissue, but not in the vegetative meristem. In inflorescences, restricted to the vasculature and absent from young flowers, except from anthers.

Its function is as follows. Able to repress WUS when constitutively overexpressed, but have no effect on CLV3. In Arabidopsis thaliana (Mouse-ear cress), this protein is Protein FANTASTIC FOUR 3 (FAF3).